The sequence spans 467 residues: Ribulose bisphosphate carboxylase large chain (467 aa).

Lys5 carries the N6,N6,N6-trimethyllysine modification. Substrate contacts are provided by Asn114 and Thr164. Residue Lys166 is the Proton acceptor of the active site. Substrate is bound at residue Lys168. 3 residues coordinate Mg(2+): Lys192, Asp194, and Glu195. Residue Lys192 is modified to N6-carboxylysine. The Proton acceptor role is filled by His285. Positions 286, 318, and 370 each coordinate substrate.

It belongs to the RuBisCO large chain family. Type I subfamily. Heterohexadecamer of 8 large chains and 8 small chains; disulfide-linked. The disulfide link is formed within the large subunit homodimers. It depends on Mg(2+) as a cofactor. The disulfide bond which can form in the large chain dimeric partners within the hexadecamer appears to be associated with oxidative stress and protein turnover.

It is found in the plastid. The protein localises to the chloroplast. It catalyses the reaction 2 (2R)-3-phosphoglycerate + 2 H(+) = D-ribulose 1,5-bisphosphate + CO2 + H2O. The catalysed reaction is D-ribulose 1,5-bisphosphate + O2 = 2-phosphoglycolate + (2R)-3-phosphoglycerate + 2 H(+). Functionally, ruBisCO catalyzes two reactions: the carboxylation of D-ribulose 1,5-bisphosphate, the primary event in carbon dioxide fixation, as well as the oxidative fragmentation of the pentose substrate in the photorespiration process. Both reactions occur simultaneously and in competition at the same active site. The sequence is that of Ribulose bisphosphate carboxylase large chain from Scutellaria bolanderi (Sierra skullcap).